Reading from the N-terminus, the 162-residue chain is NADH-quinone oxidoreductase subunit I (162 aa).

2 4Fe-4S ferredoxin-type domains span residues 52-82 (LRRY…IEAG) and 93-122 (TRYD…EGPN). [4Fe-4S] cluster contacts are provided by C62, C65, C68, C72, C102, C105, C108, and C112.

It belongs to the complex I 23 kDa subunit family. In terms of assembly, NDH-1 is composed of 14 different subunits. Subunits NuoA, H, J, K, L, M, N constitute the membrane sector of the complex. Requires [4Fe-4S] cluster as cofactor.

It is found in the cell inner membrane. The catalysed reaction is a quinone + NADH + 5 H(+)(in) = a quinol + NAD(+) + 4 H(+)(out). Its function is as follows. NDH-1 shuttles electrons from NADH, via FMN and iron-sulfur (Fe-S) centers, to quinones in the respiratory chain. The immediate electron acceptor for the enzyme in this species is believed to be ubiquinone. Couples the redox reaction to proton translocation (for every two electrons transferred, four hydrogen ions are translocated across the cytoplasmic membrane), and thus conserves the redox energy in a proton gradient. This is NADH-quinone oxidoreductase subunit I from Methylobacterium nodulans (strain LMG 21967 / CNCM I-2342 / ORS 2060).